We begin with the raw amino-acid sequence, 508 residues long: Photosystem II CP47 reaction center protein (508 aa).

6 helical membrane-spanning segments follow: residues 21-36, 101-115, 140-156, 203-218, 237-252, and 457-472; these read AVHIMHTALVAGWAGS, IVFSGLCFLSATWHW, GIHLFLSGVACFGFGAF, VAAGLLGIIAGLFHLS, VLSSSIAAVFFAAFIV, and TFALLFFFGHIWHGAR.

It belongs to the PsbB/PsbC family. PsbB subfamily. As to quaternary structure, PSII is composed of 1 copy each of membrane proteins PsbA, PsbB, PsbC, PsbD, PsbE, PsbF, PsbH, PsbI, PsbJ, PsbK, PsbL, PsbM, PsbT, PsbX, PsbY, PsbZ, Psb30/Ycf12, at least 3 peripheral proteins of the oxygen-evolving complex and a large number of cofactors. It forms dimeric complexes. Binds multiple chlorophylls. PSII binds additional chlorophylls, carotenoids and specific lipids. is required as a cofactor.

It is found in the plastid. Its subcellular location is the chloroplast thylakoid membrane. One of the components of the core complex of photosystem II (PSII). It binds chlorophyll and helps catalyze the primary light-induced photochemical processes of PSII. PSII is a light-driven water:plastoquinone oxidoreductase, using light energy to abstract electrons from H(2)O, generating O(2) and a proton gradient subsequently used for ATP formation. This chain is Photosystem II CP47 reaction center protein, found in Welwitschia mirabilis (Tree tumbo).